We begin with the raw amino-acid sequence, 213 residues long: Chloramphenicol acetyltransferase 2 (213 aa).

Residue H189 is the Proton acceptor of the active site.

It belongs to the chloramphenicol acetyltransferase family. As to quaternary structure, homotrimer.

The enzyme catalyses chloramphenicol + acetyl-CoA = chloramphenicol 3-acetate + CoA. In terms of biological role, this enzyme is an effector of chloramphenicol resistance in bacteria. In Escherichia coli, this protein is Chloramphenicol acetyltransferase 2 (cmlA).